The sequence spans 289 residues: Glucanase inhibitor protein 2 (289 aa).

The signal sequence occupies residues 1-19 (MKVTATIAAASMAIAAASA). Residues 29–257 (ILGGSIIPSG…ALKWVNPIIK (229 aa)) form the Peptidase S1 domain. C56 and C72 are oxidised to a cystine. Residues N89, N104, and N109 are each glycosylated (N-linked (GlcNAc...) asparagine). 2 disulfides stabilise this stretch: C180–C192 and C202–C233.

The protein belongs to the peptidase S1 family.

Its subcellular location is the secreted. Functionally, secreted effector that suppresses host plant glucan elicitor-mediated defense responses. Targets host endoglucanases and inhibits the endoglucanase-mediated release of elicitor-active glucan oligosaccharides from P.sojae cell walls. This is Glucanase inhibitor protein 2 from Phytophthora sojae (Soybean stem and root rot agent).